We begin with the raw amino-acid sequence, 170 residues long: MNDSTLALRRERRLLMLLGWVCIALLAGALYLQYVKNEDPCPLCIIQRYFFAAIGIFAFLAAGIRNWRVIWVFELLIAIAAAGGVGTAARHLSIQMNPGFSCGFDTLQPIVDSLPPAQWFPGMFKVAGLCETVYPPIFGILLPGWALIGFAVILVAVASSLWRHRRKLAG.

The Cytoplasmic segment spans residues 1-14; the sequence is MNDSTLALRRERRL. Residues 15-31 form a helical membrane-spanning segment; sequence LMLLGWVCIALLAGALY. Residues 32–49 lie on the Periplasmic side of the membrane; it reads LQYVKNEDPCPLCIIQRY. An intrachain disulfide couples C41 to C44. A helical membrane pass occupies residues 50–64; the sequence is FFAAIGIFAFLAAGI. Over 65 to 71 the chain is Cytoplasmic; sequence RNWRVIW. A helical membrane pass occupies residues 72-89; sequence VFELLIAIAAAGGVGTAA. Residues 90–144 lie on the Periplasmic side of the membrane; that stretch reads RHLSIQMNPGFSCGFDTLQPIVDSLPPAQWFPGMFKVAGLCETVYPPIFGILLPG. C102 and C130 are oxidised to a cystine. The chain crosses the membrane as a helical span at residues 145–163; that stretch reads WALIGFAVILVAVASSLWR. Over 164-170 the chain is Cytoplasmic; sequence HRRKLAG.

This sequence belongs to the DsbB family.

The protein localises to the cell inner membrane. In terms of biological role, required for disulfide bond formation in some periplasmic proteins. Acts by oxidizing the DsbA protein. The sequence is that of Disulfide bond formation protein B from Burkholderia ambifaria (strain ATCC BAA-244 / DSM 16087 / CCUG 44356 / LMG 19182 / AMMD) (Burkholderia cepacia (strain AMMD)).